The chain runs to 549 residues: Biotin-dependent acetyl-/propionyl-coenzyme A carboxylase beta5 subunit (549 aa).

The region spanning Thr-25–Ser-281 is the CoA carboxyltransferase N-terminal domain. The region spanning Ala-295–Lys-542 is the CoA carboxyltransferase C-terminal domain.

It belongs to the AccD/PCCB family. As to quaternary structure, the biotin-dependent acyl-CoA carboxylase complex is composed of AccA3, which contains the biotin carboxylase (BC) and biotin carboxyl carrier protein (BCCP) domains, and AccD5, which contains the carboxyl transferase (CT) domain.

It catalyses the reaction N(6)-carboxybiotinyl-L-lysyl-[protein] + acetyl-CoA = N(6)-biotinyl-L-lysyl-[protein] + malonyl-CoA. The catalysed reaction is N(6)-carboxybiotinyl-L-lysyl-[protein] + propanoyl-CoA = methylmalonyl-CoA + N(6)-biotinyl-L-lysyl-[protein]. It functions in the pathway lipid metabolism; mycolic acid biosynthesis. Functionally, component of a biotin-dependent acyl-CoA carboxylase complex. This subunit transfers the CO2 from carboxybiotin to the CoA ester substrate. When associated with the alpha3 subunit AccA3, is involved in the carboxylation of acetyl-CoA and propionyl-CoA. This is Biotin-dependent acetyl-/propionyl-coenzyme A carboxylase beta5 subunit (accD5) from Mycobacterium leprae (strain TN).